We begin with the raw amino-acid sequence, 132 residues long: Small ribosomal subunit protein uS11 (132 aa).

This sequence belongs to the universal ribosomal protein uS11 family. Part of the 30S ribosomal subunit. Interacts with proteins S7 and S18. Binds to IF-3.

In terms of biological role, located on the platform of the 30S subunit, it bridges several disparate RNA helices of the 16S rRNA. Forms part of the Shine-Dalgarno cleft in the 70S ribosome. The chain is Small ribosomal subunit protein uS11 from Dichelobacter nodosus (strain VCS1703A).